The chain runs to 339 residues: Protein RETICULATA-RELATED 2, chloroplastic (339 aa).

Residues 1–58 (MAAMAAKLHISTKSDQSNVRLPRLINLSRDPTARVLFPRNGSVSSLHTNFSSPNIMVP) constitute a chloroplast transit peptide. The segment covering 68–86 (IGNHGGGSGSGGGGGGYGG) has biased composition (gly residues). Positions 68-92 (IGNHGGGSGSGGGGGGYGGSEEEES) are disordered. Helical transmembrane passes span 148-168 (FVFS…YLLA) and 213-233 (VFAT…NGLI).

It belongs to the RETICULATA family.

The protein resides in the plastid. It localises to the chloroplast membrane. May play a role in leaf development. This Arabidopsis thaliana (Mouse-ear cress) protein is Protein RETICULATA-RELATED 2, chloroplastic.